The primary structure comprises 255 residues: Pimeloyl-[acyl-carrier protein] methyl ester esterase (255 aa).

Residues Trp-18, Ser-78 to Leu-79, and Phe-139 to Asp-143 contribute to the substrate site. Ser-78 acts as the Nucleophile in catalysis. Catalysis depends on residues Asp-203 and His-233. His-233 lines the substrate pocket.

It belongs to the AB hydrolase superfamily. Carboxylesterase BioH family. In terms of assembly, monomer.

It localises to the cytoplasm. The enzyme catalyses 6-carboxyhexanoyl-[ACP] methyl ester + H2O = 6-carboxyhexanoyl-[ACP] + methanol + H(+). It functions in the pathway cofactor biosynthesis; biotin biosynthesis. Its function is as follows. The physiological role of BioH is to remove the methyl group introduced by BioC when the pimeloyl moiety is complete. It allows to synthesize pimeloyl-ACP via the fatty acid synthetic pathway through the hydrolysis of the ester bonds of pimeloyl-ACP esters. The chain is Pimeloyl-[acyl-carrier protein] methyl ester esterase from Xylella fastidiosa (strain 9a5c).